The chain runs to 480 residues: Protein nucleotidyltransferase YdiU (480 aa).

Residues Gly-86, Gly-88, Arg-89, Lys-109, Asp-121, Gly-122, Arg-172, and Arg-179 each coordinate ATP. Residue Asp-248 is the Proton acceptor of the active site. Asn-249 and Asp-258 together coordinate Mg(2+). Asp-258 is an ATP binding site.

The protein belongs to the SELO family. The cofactor is Mg(2+). Mn(2+) serves as cofactor.

The catalysed reaction is L-seryl-[protein] + ATP = 3-O-(5'-adenylyl)-L-seryl-[protein] + diphosphate. It catalyses the reaction L-threonyl-[protein] + ATP = 3-O-(5'-adenylyl)-L-threonyl-[protein] + diphosphate. It carries out the reaction L-tyrosyl-[protein] + ATP = O-(5'-adenylyl)-L-tyrosyl-[protein] + diphosphate. The enzyme catalyses L-histidyl-[protein] + UTP = N(tele)-(5'-uridylyl)-L-histidyl-[protein] + diphosphate. The catalysed reaction is L-seryl-[protein] + UTP = O-(5'-uridylyl)-L-seryl-[protein] + diphosphate. It catalyses the reaction L-tyrosyl-[protein] + UTP = O-(5'-uridylyl)-L-tyrosyl-[protein] + diphosphate. Its function is as follows. Nucleotidyltransferase involved in the post-translational modification of proteins. It can catalyze the addition of adenosine monophosphate (AMP) or uridine monophosphate (UMP) to a protein, resulting in modifications known as AMPylation and UMPylation. In Salmonella paratyphi B (strain ATCC BAA-1250 / SPB7), this protein is Protein nucleotidyltransferase YdiU.